The following is a 395-amino-acid chain: Acid ceramidase (395 aa).

The N-terminal stretch at 1–20 is a signal peptide; the sequence is MLGWSRLTFILLSGIVTCLV. Cys31 and Cys340 are joined by a disulfide. The active-site Nucleophile is the Cys143. N-linked (GlcNAc...) asparagine glycans are attached at residues Asn195, Asn259, Asn286, and Asn342. An intrachain disulfide couples Cys388 to Cys392.

This sequence belongs to the acid ceramidase family. As to quaternary structure, heterodimer; disulfide-linked. The heterodimer is composed of the disulfide-linked alpha and beta chains produced by autocatalytic cleavage of the precursor. Post-translationally, N-glycosylated. Proteolytically cleaved into two chains alpha and beta that remain associated via a disulfide bond. Cleavage gives rise to a conformation change that activates the enzyme. The same catalytic Cys residue mediates the autoproteolytic cleavage and subsequent hydrolysis of lipid substrates. The beta chain may undergo an additional C-terminal processing.

It localises to the lysosome. Its subcellular location is the secreted. It carries out the reaction an N-acylsphing-4-enine + H2O = sphing-4-enine + a fatty acid. The catalysed reaction is N-dodecanoylsphing-4-enine + H2O = dodecanoate + sphing-4-enine. The enzyme catalyses N-tetradecanoylsphing-4-enine + H2O = tetradecanoate + sphing-4-enine. It catalyses the reaction N-hexadecanoylsphing-4-enine + H2O = sphing-4-enine + hexadecanoate. It carries out the reaction N-octadecanoylsphing-4-enine + H2O = sphing-4-enine + octadecanoate. The catalysed reaction is N-dodecanoyl-(4R)-hydroxysphinganine + H2O = (4R)-hydroxysphinganine + dodecanoate. The enzyme catalyses N-(dodecanoyl)-sphinganine + H2O = dodecanoate + sphinganine. It catalyses the reaction N-(acetyl)-sphing-4-enine + H2O = sphing-4-enine + acetate. It carries out the reaction N-(hexanoyl)sphing-4-enine + H2O = hexanoate + sphing-4-enine. The catalysed reaction is N-octanoylsphing-4-enine + H2O = octanoate + sphing-4-enine. The enzyme catalyses N-(9Z-octadecenoyl)-sphing-4-enine + H2O = sphing-4-enine + (9Z)-octadecenoate. It catalyses the reaction N-dodecanoylethanolamine + H2O = dodecanoate + ethanolamine. It functions in the pathway lipid metabolism; sphingolipid metabolism. Functionally, lysosomal ceramidase that hydrolyzes sphingolipid ceramides into sphingosine and free fatty acids at acidic pH. Ceramides, sphingosine, and its phosphorylated form sphingosine-1-phosphate are bioactive lipids that mediate cellular signaling pathways regulating several biological processes including cell proliferation, apoptosis and differentiation. Has a higher catalytic efficiency towards C12-ceramides versus other ceramides. Also catalyzes the reverse reaction allowing the synthesis of ceramides from fatty acids and sphingosine. For the reverse synthetic reaction, the natural sphingosine D-erythro isomer is more efficiently utilized as a substrate compared to D-erythro-dihydrosphingosine and D-erythro-phytosphingosine, while the fatty acids with chain lengths of 12 or 14 carbons are the most efficiently used. Also has an N-acylethanolamine hydrolase activity. By regulating the levels of ceramides, sphingosine and sphingosine-1-phosphate in the epidermis, mediates the calcium-induced differentiation of epidermal keratinocytes. Also indirectly regulates tumor necrosis factor/TNF-induced apoptosis. By regulating the intracellular balance between ceramides and sphingosine, in adrenocortical cells, probably also acts as a regulator of steroidogenesis. The chain is Acid ceramidase from Bos taurus (Bovine).